Reading from the N-terminus, the 264-residue chain is Na(+)-translocating NADH-quinone reductase subunit E (264 aa).

A run of 6 helical transmembrane segments spans residues 11–31, 50–70, 90–110, 123–143, 149–169, and 189–209; these read VFGIFLQATFIQNILLSNFLG, MSVALVLTVTGSINWVVHTFI, FLELIIFIVVIAAFTQILELL, GIFLPLIAVNCAILGGVLFGI, FIPMMIFSLGAGCGWWLAIVL, and MGISFITTGLIAMAFMSLTGI.

This sequence belongs to the NqrDE/RnfAE family. As to quaternary structure, composed of six subunits; NqrA, NqrB, NqrC, NqrD, NqrE and NqrF.

Its subcellular location is the cell inner membrane. The enzyme catalyses a ubiquinone + n Na(+)(in) + NADH + H(+) = a ubiquinol + n Na(+)(out) + NAD(+). NQR complex catalyzes the reduction of ubiquinone-1 to ubiquinol by two successive reactions, coupled with the transport of Na(+) ions from the cytoplasm to the periplasm. NqrA to NqrE are probably involved in the second step, the conversion of ubisemiquinone to ubiquinol. In Chlamydia caviae (strain ATCC VR-813 / DSM 19441 / 03DC25 / GPIC) (Chlamydophila caviae), this protein is Na(+)-translocating NADH-quinone reductase subunit E.